Consider the following 277-residue polypeptide: 4-diphosphocytidyl-2-C-methyl-D-erythritol kinase (277 aa).

Residue K9 is part of the active site. 91 to 101 (PMGAGLGGGSS) is a binding site for ATP. Residue D133 is part of the active site.

The protein belongs to the GHMP kinase family. IspE subfamily.

The catalysed reaction is 4-CDP-2-C-methyl-D-erythritol + ATP = 4-CDP-2-C-methyl-D-erythritol 2-phosphate + ADP + H(+). It functions in the pathway isoprenoid biosynthesis; isopentenyl diphosphate biosynthesis via DXP pathway; isopentenyl diphosphate from 1-deoxy-D-xylulose 5-phosphate: step 3/6. In terms of biological role, catalyzes the phosphorylation of the position 2 hydroxy group of 4-diphosphocytidyl-2C-methyl-D-erythritol. The sequence is that of 4-diphosphocytidyl-2-C-methyl-D-erythritol kinase from Acinetobacter baumannii (strain AB307-0294).